A 353-amino-acid polypeptide reads, in one-letter code: Thiamine-phosphate synthase (353 aa).

The unknown stretch occupies residues 1–128 (MESMPVAPST…ARTAAAVRYA (128 aa)). The tract at residues 129–353 (LYDHEVRILE…ASRQLLDLLT (225 aa)) is thiamine-phosphate synthase. 4-amino-2-methyl-5-(diphosphooxymethyl)pyrimidine-binding positions include 185-189 (QYRRK) and N217. Residues D218 and D237 each contribute to the Mg(2+) site. S256 contributes to the 4-amino-2-methyl-5-(diphosphooxymethyl)pyrimidine binding site. Residue 282–284 (TAT) participates in 2-[(2R,5Z)-2-carboxy-4-methylthiazol-5(2H)-ylidene]ethyl phosphate binding. 4-amino-2-methyl-5-(diphosphooxymethyl)pyrimidine is bound at residue K285. 2-[(2R,5Z)-2-carboxy-4-methylthiazol-5(2H)-ylidene]ethyl phosphate is bound by residues G312 and 332–333 (VS).

The protein belongs to the thiamine-phosphate synthase family. Requires Mg(2+) as cofactor.

It catalyses the reaction 2-[(2R,5Z)-2-carboxy-4-methylthiazol-5(2H)-ylidene]ethyl phosphate + 4-amino-2-methyl-5-(diphosphooxymethyl)pyrimidine + 2 H(+) = thiamine phosphate + CO2 + diphosphate. The enzyme catalyses 2-(2-carboxy-4-methylthiazol-5-yl)ethyl phosphate + 4-amino-2-methyl-5-(diphosphooxymethyl)pyrimidine + 2 H(+) = thiamine phosphate + CO2 + diphosphate. The catalysed reaction is 4-methyl-5-(2-phosphooxyethyl)-thiazole + 4-amino-2-methyl-5-(diphosphooxymethyl)pyrimidine + H(+) = thiamine phosphate + diphosphate. The protein operates within cofactor biosynthesis; thiamine diphosphate biosynthesis; thiamine phosphate from 4-amino-2-methyl-5-diphosphomethylpyrimidine and 4-methyl-5-(2-phosphoethyl)-thiazole: step 1/1. Functionally, condenses 4-methyl-5-(beta-hydroxyethyl)thiazole monophosphate (THZ-P) and 2-methyl-4-amino-5-hydroxymethyl pyrimidine pyrophosphate (HMP-PP) to form thiamine monophosphate (TMP). This is Thiamine-phosphate synthase from Synechococcus sp. (strain WH7803).